A 208-amino-acid polypeptide reads, in one-letter code: Pyrophosphate-energized proton pump 2 (208 aa).

Helical transmembrane passes span 19-39 (AYPL…TFFV), 54-74 (GLIV…SFTI), 89-109 (GGNL…IVVI), 140-160 (LAVS…GIIA), and 167-187 (LFGT…IVAL).

Belongs to the H(+)-translocating pyrophosphatase (TC 3.A.10) family. Homodimer. It depends on Mg(2+) as a cofactor.

It is found in the cell inner membrane. The catalysed reaction is diphosphate + H2O + H(+)(in) = 2 phosphate + 2 H(+)(out). In terms of biological role, proton pump that utilizes the energy of pyrophosphate hydrolysis as the driving force for proton movement across the membrane. Generates a proton motive force. The sequence is that of Pyrophosphate-energized proton pump 2 (hppA2) from Mycoplana dimorpha.